The chain runs to 407 residues: Succinate--CoA ligase [ADP-forming] subunit beta, hydrogenosomal (407 aa).

Residues 1–9 (MLSSSFARN) constitute a hydrogenosome transit peptide. The ATP-grasp domain occupies 18 to 261 (KEICAKYNVA…LKQVNPFEIR (244 aa)). ATP is bound by residues Lys-55, 62–64 (GRG), and Glu-124. Residues Asn-216 and Asp-230 each coordinate Mg(2+). Substrate-binding positions include Asn-281 and 338–340 (GIV).

The protein belongs to the succinate/malate CoA ligase beta subunit family. In terms of assembly, heterodimer of an alpha and a beta subunit. Mg(2+) serves as cofactor.

The protein resides in the hydrogenosome. The catalysed reaction is succinate + ATP + CoA = succinyl-CoA + ADP + phosphate. The protein operates within carbohydrate metabolism; tricarboxylic acid cycle; succinate from succinyl-CoA (ligase route): step 1/1. In terms of biological role, succinyl-CoA synthetase functions in the citric acid cycle (TCA), coupling the hydrolysis of succinyl-CoA to the synthesis of ATP and thus represents the only step of substrate-level phosphorylation in the TCA. The beta subunit provides nucleotide specificity of the enzyme and binds the substrate succinate, while the binding sites for coenzyme A and phosphate are found in the alpha subunit. This Trichomonas vaginalis protein is Succinate--CoA ligase [ADP-forming] subunit beta, hydrogenosomal.